Reading from the N-terminus, the 249-residue chain is uncharacterized protein (249 aa).

The protein belongs to the HAD-like hydrolase superfamily. CbbY/CbbZ/Gph/YieH family.

This is an uncharacterized protein from Schizosaccharomyces pombe (strain 972 / ATCC 24843) (Fission yeast).